Consider the following 184-residue polypeptide: Gremlin-1 (184 aa).

Positions 1 to 24 are cleaved as a signal peptide; the sequence is MNRTAYTVGALLLLLGTLLPTAEG. The interval 23 to 77 is disordered; it reads EGKKKGSQGAIPPPDKAQHNDSEQTQSPPQPGSRTRGRGQGRGTAMPGEEVLESS. An N-linked (GlcNAc...) asparagine glycan is attached at N42. 4 disulfide bridges follow: C94/C144, C108/C158, C118/C176, and C122/C178. Residues 94–184 enclose the CTCK domain; it reads CKTQPLKQTI…QCRCISIDLD (91 aa).

The protein belongs to the DAN family. As to quaternary structure, homodimer; can also form homooligomers. Interacts with BMP2; can form higher oligomers with BMP2. Interacts with SLIT1 and SLIT2 in a glycosylation-dependent manner. As to expression, highly expressed in spleen and to a lesser extent in lung, skeletal muscle and kidney. Expressed only in non-transformed cells or primary fibroblasts in culture but not in established transformed or tumor derived cell lines. Broadly expressed in limb bud mesenchyme but restricted to the distal limb bud mesenchyme and concentrated posteriorly. Expressed in ovary especially in granulosa cells of follicles of type 4.

The protein resides in the secreted. Cytokine that may play an important role during carcinogenesis and metanephric kidney organogenesis, as BMP a antagonist required for early limb outgrowth and patterning in maintaining the FGF4-SHH feedback loop. Down-regulates the BMP4 signaling in a dose-dependent manner. Antagonist of BMP2; inhibits BMP2-mediated differentiation of osteoblasts (in vitro). Acts as inhibitor of monocyte chemotaxis. In Mus musculus (Mouse), this protein is Gremlin-1 (Grem1).